Here is a 463-residue protein sequence, read N- to C-terminus: Membrane-bound lytic murein transglycosylase F (463 aa).

Positions 1–33 are cleaved as a signal peptide; the sequence is MQSQDYKKRLKLQIIIILSIAVMSCGVPNVPTA. Positions 34-272 are non-LT domain; sequence LSSLLERESI…VLEDKYFGHI (239 aa). The segment at 273–463 is LT domain; it reads RQFDYVDSRA…LVWLDEQGKI (191 aa). The active site involves Glu317.

It in the N-terminal section; belongs to the bacterial solute-binding protein 3 family. In the C-terminal section; belongs to the transglycosylase Slt family.

The protein resides in the cell outer membrane. The catalysed reaction is Exolytic cleavage of the (1-&gt;4)-beta-glycosidic linkage between N-acetylmuramic acid (MurNAc) and N-acetylglucosamine (GlcNAc) residues in peptidoglycan, from either the reducing or the non-reducing ends of the peptidoglycan chains, with concomitant formation of a 1,6-anhydrobond in the MurNAc residue.. Murein-degrading enzyme that degrades murein glycan strands and insoluble, high-molecular weight murein sacculi, with the concomitant formation of a 1,6-anhydromuramoyl product. Lytic transglycosylases (LTs) play an integral role in the metabolism of the peptidoglycan (PG) sacculus. Their lytic action creates space within the PG sacculus to allow for its expansion as well as for the insertion of various structures such as secretion systems and flagella. The polypeptide is Membrane-bound lytic murein transglycosylase F (Alteromonas mediterranea (strain DSM 17117 / CIP 110805 / LMG 28347 / Deep ecotype)).